The primary structure comprises 180 residues: MSFIDKILDKMSLNSEDDEEFDNEDYYLDDEEEEELPRNPFRRKKEAVEEETAIKSTRRDTTPKEKPVKTTSKITPISKSSRKQVASDMEVCVIKPSSIEDEIEITDTLLNGRTVVINMEGLNVDVAQRIIDFTSGSAYALHGNLQKISNFIFIATPHGVDISGDIQSLMDSFDLPGSSY.

Residues 14 to 81 (NSEDDEEFDN…SKITPISKSS (68 aa)) form a disordered region. The span at 15 to 35 (SEDDEEFDNEDYYLDDEEEEE) shows a compositional bias: acidic residues. The segment covering 57-68 (TRRDTTPKEKPV) has biased composition (basic and acidic residues). Residues 69–79 (KTTSKITPISK) show a composition bias toward low complexity.

Belongs to the SepF family. In terms of assembly, homodimer. Interacts with FtsZ.

It localises to the cytoplasm. Its function is as follows. Cell division protein that is part of the divisome complex and is recruited early to the Z-ring. Probably stimulates Z-ring formation, perhaps through the cross-linking of FtsZ protofilaments. Its function overlaps with FtsA. This is Cell division protein SepF from Agathobacter rectalis (strain ATCC 33656 / DSM 3377 / JCM 17463 / KCTC 5835 / VPI 0990) (Eubacterium rectale).